The primary structure comprises 187 residues: Peptide deformylase 1 (187 aa).

2 residues coordinate Fe cation: C107 and H149. E150 is an active-site residue. H153 is a binding site for Fe cation.

Belongs to the polypeptide deformylase family. Requires Fe(2+) as cofactor.

The catalysed reaction is N-terminal N-formyl-L-methionyl-[peptide] + H2O = N-terminal L-methionyl-[peptide] + formate. Removes the formyl group from the N-terminal Met of newly synthesized proteins. Requires at least a dipeptide for an efficient rate of reaction. N-terminal L-methionine is a prerequisite for activity but the enzyme has broad specificity at other positions. The sequence is that of Peptide deformylase 1 from Nostoc sp. (strain PCC 7120 / SAG 25.82 / UTEX 2576).